Here is a 309-residue protein sequence, read N- to C-terminus: Cutinase (309 aa).

Positions Met-1–Ala-47 are cleaved as a signal peptide. Residue Ser-178 is the Nucleophile of the active site. Residues Asp-224 and His-256 each act as charge relay system in the active site. A disulfide bridge connects residues Cys-289 and Cys-305.

It belongs to the AB hydrolase superfamily.

It is found in the secreted. The catalysed reaction is a carboxylic ester + H2O = an alcohol + a carboxylate + H(+). The enzyme catalyses a triacylglycerol + H2O = a diacylglycerol + a fatty acid + H(+). It catalyses the reaction 1,2,3-tri-(9Z-octadecenoyl)-glycerol + H2O = di-(9Z)-octadecenoylglycerol + (9Z)-octadecenoate + H(+). It carries out the reaction (6-hydroxyhexanoyl)(n) + H2O = (6-hydroxyhexanoyl)(n-1) + 6-hydroxyhexanoate + H(+). The catalysed reaction is cutin + H2O = cutin monomers.. No effect on activity by SDS or chelating agents ethylenediaminetetraacetic acid (EDTA) or sodium citrate. No effect on activity by metal ions Ag(+), Ba(2+), Ca(2+), Co(2+), Cu(2+), Mn(2+), Ni(2+), Pb(2+) or Zn(2+). Activated by 1 mM digitonin and sodium deoxycholate, and reducing agents 1 mM 1,4-dithiothreitol, beta-mercaptoethanol and ascorbic acid. Activated by benzene, n-hexane, p-xylene and toluene. Activated by Fe(3+). Inhibited slightly by 1 mM of different chain length fatty acids, and only marginally by 6.0 M urea. Inhibited strongly with chemical modification by reagents phenyl methyl sulfonylfluorid (PMSF), 1-ethyl-3-(3-dimethylaminopropyl) carbodiimide (EDAC), diethylpyrocarbonate (DEPC) and N-bromosuccinimide (NBS). Inhibited by pyridine, DMSO, t-butanol and dodecane. Inhibited by Li(+), Hg(2+) and Mg(2+). No inhibition with chemical modification by reagents N-acetylimidazole (NAI), citraconic anhydride (CA), iodoacetate (IA) and phenylglyoxal (PG). Functionally, catalyzes the hydrolysis of cutin, a polyester that forms the structure of plant cuticle. Shows esterase activity towards p-nitrophenol-linked aliphatic esters (pNP-aliphatic esters). Has a preference for medium chain length (C-4 to C-12) fatty acid esters. Active with p-nitrophenyl palmitate (p-NPP) as substrate. Hydrolyzes triacylglycerol substrates non-specifically with a preference for long, unsaturated fatty acyl chains with the highest activity for triolein. Substrates with cis-9 unsaturation are preferred over the saturated triacylglycerols. Hydrolyzes a wide range of natural oils, especially olive oil, with relatively high activity. Capable of catalyzing synthesis of the flavor ester isoamyl acetate by esterification of isoamyl alcohol using acetic acid as an acyl donor. Degrades synthetic aliphatic polyesters, namely poly(1,4-butylene succinate) extended with 1,6-diisocyanatohexane (PBSc-D) and poly(epsilon-caprolactone) (PCL) plastics. Does not degrade poly(lactic acid) (PLA) nor aromatic poly(ethylene terephthalate) (PET), the most abundant polyester plastic in the world. The polypeptide is Cutinase (Amycolatopsis mediterranei (strain S699) (Nocardia mediterranei)).